The sequence spans 264 residues: MKQYLELMQKVLDEGTQKNDRTGTGTLSIFGHQMRFNLQDGFPLVTTKRCHLRSIIHELLWFLQGDTNIAYLHENNVTIWDEWADENGDLGPVYGKQWRAWPTPDGRHIDQITTVLNQLKNDPDSRRIIVSAWNVGELDKMALAPCHAFFQFYVADGKLSCQLYQRSCDVFLGLPFNIASYALLVHMMAQQCDLEVGDFVWTGGDTHLYSNHMDQTHLQLSREPRPLPKLIIKRKPESIFDYRFEDFEIEGYAPHPGIKAPVAI.

Residue Arg-21 participates in dUMP binding. Residue His-51 coordinates (6R)-5,10-methylene-5,6,7,8-tetrahydrofolate. 126-127 (RR) contacts dUMP. Residue Cys-146 is the Nucleophile of the active site. DUMP-binding positions include 166–169 (RSCD), Asn-177, and 207–209 (HLY). Residue Asp-169 coordinates (6R)-5,10-methylene-5,6,7,8-tetrahydrofolate. Ala-263 serves as a coordination point for (6R)-5,10-methylene-5,6,7,8-tetrahydrofolate.

The protein belongs to the thymidylate synthase family. Bacterial-type ThyA subfamily. Homodimer.

It is found in the cytoplasm. The catalysed reaction is dUMP + (6R)-5,10-methylene-5,6,7,8-tetrahydrofolate = 7,8-dihydrofolate + dTMP. Its pathway is pyrimidine metabolism; dTTP biosynthesis. In terms of biological role, catalyzes the reductive methylation of 2'-deoxyuridine-5'-monophosphate (dUMP) to 2'-deoxythymidine-5'-monophosphate (dTMP) while utilizing 5,10-methylenetetrahydrofolate (mTHF) as the methyl donor and reductant in the reaction, yielding dihydrofolate (DHF) as a by-product. This enzymatic reaction provides an intracellular de novo source of dTMP, an essential precursor for DNA biosynthesis. The chain is Thymidylate synthase from Shigella boydii serotype 4 (strain Sb227).